Reading from the N-terminus, the 220-residue chain is Cytidylate kinase (220 aa).

11–19 (GPTASGKGT) contacts ATP.

The protein belongs to the cytidylate kinase family. Type 1 subfamily.

It is found in the cytoplasm. It carries out the reaction CMP + ATP = CDP + ADP. It catalyses the reaction dCMP + ATP = dCDP + ADP. The sequence is that of Cytidylate kinase from Polynucleobacter asymbioticus (strain DSM 18221 / CIP 109841 / QLW-P1DMWA-1) (Polynucleobacter necessarius subsp. asymbioticus).